A 255-amino-acid chain; its full sequence is Type III pantothenate kinase (255 aa).

6-13 (DIGNTNIK) is an ATP binding site. 107-110 (GADR) contacts substrate. Catalysis depends on Asp-109, which acts as the Proton acceptor. Residue Thr-132 coordinates ATP. Thr-184 serves as a coordination point for substrate.

Belongs to the type III pantothenate kinase family. Homodimer. It depends on NH4(+) as a cofactor. K(+) serves as cofactor.

Its subcellular location is the cytoplasm. It catalyses the reaction (R)-pantothenate + ATP = (R)-4'-phosphopantothenate + ADP + H(+). It functions in the pathway cofactor biosynthesis; coenzyme A biosynthesis; CoA from (R)-pantothenate: step 1/5. Functionally, catalyzes the phosphorylation of pantothenate (Pan), the first step in CoA biosynthesis. In Roseiflexus sp. (strain RS-1), this protein is Type III pantothenate kinase.